A 212-amino-acid chain; its full sequence is Negative modulator of initiation of replication (212 aa).

2 interaction with DNA regions span residues 113 to 114 and 144 to 148; these read AV and RTRVY.

The protein belongs to the SeqA family. Homodimer. Polymerizes to form helical filaments.

Its subcellular location is the cytoplasm. In terms of biological role, negative regulator of replication initiation, which contributes to regulation of DNA replication and ensures that replication initiation occurs exactly once per chromosome per cell cycle. Binds to pairs of hemimethylated GATC sequences in the oriC region, thus preventing assembly of replication proteins and re-initiation at newly replicated origins. Repression is relieved when the region becomes fully methylated. The chain is Negative modulator of initiation of replication from Actinobacillus succinogenes (strain ATCC 55618 / DSM 22257 / CCUG 43843 / 130Z).